A 288-amino-acid chain; its full sequence is Acetyl-coenzyme A carboxylase carboxyl transferase subunit beta, chloroplastic (288 aa).

Residues 30–288 (LWIKCFDCGL…QILSLHNHSK (259 aa)) enclose the CoA carboxyltransferase N-terminal domain. The Zn(2+) site is built by C34, C37, C53, and C56. A C4-type zinc finger spans residues 34–56 (CFDCGLLMYSKVLKRNLKVCPQC).

Belongs to the AccD/PCCB family. Acetyl-CoA carboxylase is a heterohexamer composed of biotin carboxyl carrier protein, biotin carboxylase and 2 subunits each of ACCase subunit alpha and ACCase plastid-coded subunit beta (accD). Zn(2+) is required as a cofactor.

It is found in the plastid. It localises to the chloroplast stroma. The catalysed reaction is N(6)-carboxybiotinyl-L-lysyl-[protein] + acetyl-CoA = N(6)-biotinyl-L-lysyl-[protein] + malonyl-CoA. It functions in the pathway lipid metabolism; malonyl-CoA biosynthesis; malonyl-CoA from acetyl-CoA: step 1/1. Its function is as follows. Component of the acetyl coenzyme A carboxylase (ACC) complex. Biotin carboxylase (BC) catalyzes the carboxylation of biotin on its carrier protein (BCCP) and then the CO(2) group is transferred by the transcarboxylase to acetyl-CoA to form malonyl-CoA. This is Acetyl-coenzyme A carboxylase carboxyl transferase subunit beta, chloroplastic from Pyropia yezoensis (Susabi-nori).